The sequence spans 281 residues: Ribosomal RNA small subunit methyltransferase A (281 aa).

S-adenosyl-L-methionine-binding residues include N36, L38, G63, E84, D109, and N127.

It belongs to the class I-like SAM-binding methyltransferase superfamily. rRNA adenine N(6)-methyltransferase family. RsmA subfamily.

The protein localises to the cytoplasm. It carries out the reaction adenosine(1518)/adenosine(1519) in 16S rRNA + 4 S-adenosyl-L-methionine = N(6)-dimethyladenosine(1518)/N(6)-dimethyladenosine(1519) in 16S rRNA + 4 S-adenosyl-L-homocysteine + 4 H(+). Specifically dimethylates two adjacent adenosines (A1518 and A1519) in the loop of a conserved hairpin near the 3'-end of 16S rRNA in the 30S particle. May play a critical role in biogenesis of 30S subunits. The sequence is that of Ribosomal RNA small subunit methyltransferase A from Borreliella burgdorferi (strain ATCC 35210 / DSM 4680 / CIP 102532 / B31) (Borrelia burgdorferi).